Reading from the N-terminus, the 254-residue chain is Small ribosomal subunit protein uS2 (254 aa).

Belongs to the universal ribosomal protein uS2 family.

The chain is Small ribosomal subunit protein uS2 from Legionella pneumophila (strain Corby).